The following is a 273-amino-acid chain: Ribonuclease Z (273 aa).

5 residues coordinate Zn(2+): His-61, His-63, His-146, Asp-169, and His-233.

It belongs to the RNase Z family. As to quaternary structure, homodimer. It depends on Zn(2+) as a cofactor.

It catalyses the reaction Endonucleolytic cleavage of RNA, removing extra 3' nucleotides from tRNA precursor, generating 3' termini of tRNAs. A 3'-hydroxy group is left at the tRNA terminus and a 5'-phosphoryl group is left at the trailer molecule.. Functionally, zinc phosphodiesterase, which displays some tRNA 3'-processing endonuclease activity. Probably involved in tRNA maturation, by removing a 3'-trailer from precursor tRNA. This Mycobacterium tuberculosis (strain ATCC 25177 / H37Ra) protein is Ribonuclease Z.